We begin with the raw amino-acid sequence, 375 residues long: Protein abhd-3.2 (375 aa).

Positions 108–203 constitute an AB hydrolase-1 domain; sequence PIVVFLPGIT…ILWNYLAMTG (96 aa). Active-site charge relay system residues include Ser189, Asp315, and His344.

It belongs to the AB hydrolase superfamily. AB hydrolase 4 family.

The polypeptide is Protein abhd-3.2 (Caenorhabditis elegans).